We begin with the raw amino-acid sequence, 1231 residues long: Protein FAM193A (1231 aa).

Positions 106–142 (CTEDMYSTLLQRYQRSEEELRKVAEEWLECQKRIDAY) form a coiled coil. The disordered stretch occupies residues 249 to 272 (DYLSEMRPPSVSSASSGSGSSSPI). Low complexity predominate over residues 258–270 (SVSSASSGSGSSS). Ser293 carries the post-translational modification Phosphoserine. 5 disordered regions span residues 331 to 405 (NGGG…QAEQ), 633 to 703 (QSSS…APSF), 719 to 789 (SFCP…NQKE), 826 to 845 (LTKRKEEQPKKMEQISEREG), and 860 to 1174 (NSSE…SSLD). A compositionally biased stretch (acidic residues) spans 355-365 (EADDEDADGES). A Phosphoserine modification is found at Ser648. Positions 676 to 691 (LAPLPALSPSALSPAS) are enriched in low complexity. Acidic residues predominate over residues 761–773 (QQDDGDESADEDS). A compositionally biased stretch (low complexity) spans 776 to 785 (EHSSSTSTST). The span at 872-881 (AAKRARHKQR) shows a compositional bias: basic residues. Residues 877-973 (RHKQRKLEEK…ATESISNSEN (97 aa)) are a coiled coil. Basic and acidic residues predominate over residues 882-909 (KLEEKARLEAEARAREHLHHQEEQKQRE). A compositionally biased stretch (acidic residues) spans 910–920 (EEEDEEEEDEE). Basic and acidic residues predominate over residues 921 to 935 (QHFKEEFQRLQELQK). Residues 937–946 (RAAKKKKKDR) show a composition bias toward basic residues. A compositionally biased stretch (polar residues) spans 962–979 (QAATESISNSENIHNGSL). Residues Ser1136 and Ser1151 each carry the phosphoserine modification. The span at 1156–1166 (GKNKKNKKKKG) shows a compositional bias: basic residues.

It belongs to the FAM193 family.

The polypeptide is Protein FAM193A (Fam193a) (Mus musculus (Mouse)).